The following is a 238-amino-acid chain: Small ribosomal subunit protein uS2 (238 aa).

Belongs to the universal ribosomal protein uS2 family.

This is Small ribosomal subunit protein uS2 from Actinobacillus pleuropneumoniae serotype 5b (strain L20).